Consider the following 289-residue polypeptide: Putative transmembrane protein ORF111 (289 aa).

The next 5 membrane-spanning stretches (helical) occupy residues 1-21 (MIGP…IFML), 112-132 (AIIT…VCIA), 151-171 (IGIT…FIVI), 189-209 (LNIS…TSIL), and 261-281 (YLLT…IGVG).

Its subcellular location is the host membrane. In Ostreid herpesvirus 1 (isolate France) (OsHV-1), this protein is Putative transmembrane protein ORF111.